A 509-amino-acid polypeptide reads, in one-letter code: Histidine--tRNA ligase, cytoplasmic (509 aa).

Ala-2 is subject to N-acetylalanine. Residues Glu-3–Pro-59 form the WHEP-TRS domain. Ser-66 carries the post-translational modification Phosphoserine. L-histidine contacts are provided by residues Asp-130–Thr-132, Arg-157, Gln-173, Asp-177, Arg-326, and Tyr-330–Tyr-331. A Phosphoserine modification is found at Ser-356.

It belongs to the class-II aminoacyl-tRNA synthetase family. In terms of assembly, homodimer.

The protein resides in the cytoplasm. The catalysed reaction is tRNA(His) + L-histidine + ATP = L-histidyl-tRNA(His) + AMP + diphosphate + H(+). Its function is as follows. Catalyzes the ATP-dependent ligation of histidine to the 3'-end of its cognate tRNA, via the formation of an aminoacyl-adenylate intermediate (His-AMP). Plays a role in axon guidance. The protein is Histidine--tRNA ligase, cytoplasmic (HARS1) of Pongo abelii (Sumatran orangutan).